The primary structure comprises 259 residues: 3'-5' ssDNA/RNA exonuclease TatD (259 aa).

Residues Glu-92, His-128, and His-153 each contribute to the a divalent metal cation site.

Belongs to the metallo-dependent hydrolases superfamily. TatD-type hydrolase family. TatD subfamily. As to quaternary structure, monomer. Mg(2+) is required as a cofactor.

It is found in the cytoplasm. In terms of biological role, 3'-5' exonuclease that prefers single-stranded DNA and RNA. May play a role in the H(2)O(2)-induced DNA damage repair. The protein is 3'-5' ssDNA/RNA exonuclease TatD of Erwinia amylovora (strain ATCC 49946 / CCPPB 0273 / Ea273 / 27-3).